Here is a 440-residue protein sequence, read N- to C-terminus: Exosome complex component RRP45 (440 aa).

At Ser65 the chain carries Phosphoserine. Lys297 carries the N6-acetyllysine; alternate modification. Residue Lys297 forms a Glycyl lysine isopeptide (Lys-Gly) (interchain with G-Cter in SUMO1); alternate linkage. Lys297 participates in a covalent cross-link: Glycyl lysine isopeptide (Lys-Gly) (interchain with G-Cter in SUMO2); alternate. Phosphoserine is present on residues Ser306 and Ser346. The interval 341-362 (EGIENSWGHLEDSEKEDEDEGG) is disordered. Positions 353 to 362 (SEKEDEDEGG) are enriched in acidic residues. Phosphoserine is present on residues Ser393 and Ser395. A disordered region spans residues 404 to 440 (EPDKNPKKIRTQTISATQVKAPSKKPVKKRKKKRAAN). Basic residues predominate over residues 425–440 (PSKKPVKKRKKKRAAN).

Belongs to the RNase PH family. As to quaternary structure, component of the RNA exosome core complex (Exo-9), composed of EXOSC1, EXOSC2, EXOSC3, EXOSC4, EXOSC5, EXOSC6, EXOSC7, EXOSC8 and EXOSC9; within the complex interacts with EXOSC3, EXOSC4, EXOSC5 and DIS3. The catalytically inactive RNA exosome core complex (Exo-9) associates with the catalytic subunit EXOSC10/RRP6. Exo-9 may associate with DIS3 to form the nucleolar exosome complex, or DIS3L to form the cytoplasmic exosome complex. Exo-9 is formed by a hexameric base ring consisting of the heterodimers EXOSC4-EXOSC9, EXOSC5-EXOSC8 and EXOSC6-EXOSC7, and a cap ring consisting of EXOSC1, EXOSC2 and EXOSC3. The RNA exosome complex associates with cofactors C1D/RRP47, MPHOSPH6/MPP6 and MTREX/MTR4. Interacts (via C-terminus region) with SETX (via N-terminus domain); the interaction enhances SETX sumoylation. Interacts with DIS3; the interaction is direct.

It localises to the cytoplasm. The protein resides in the nucleus. It is found in the nucleolus. The protein localises to the nucleoplasm. In terms of biological role, non-catalytic component of the RNA exosome complex which has 3'-&gt;5' exoribonuclease activity and participates in a multitude of cellular RNA processing and degradation events. In the nucleus, the RNA exosome complex is involved in proper maturation of stable RNA species such as rRNA, snRNA and snoRNA, in the elimination of RNA processing by-products and non-coding 'pervasive' transcripts, such as antisense RNA species and promoter-upstream transcripts (PROMPTs), and of mRNAs with processing defects, thereby limiting or excluding their export to the cytoplasm. The RNA exosome may be involved in Ig class switch recombination (CSR) and/or Ig variable region somatic hypermutation (SHM) by targeting AICDA deamination activity to transcribed dsDNA substrates. In the cytoplasm, the RNA exosome complex is involved in general mRNA turnover and specifically degrades inherently unstable mRNAs containing AU-rich elements (AREs) within their 3' untranslated regions, and in RNA surveillance pathways, preventing translation of aberrant mRNAs. It seems to be involved in degradation of histone mRNA. The catalytic inactive RNA exosome core complex of 9 subunits (Exo-9) is proposed to play a pivotal role in the binding and presentation of RNA for ribonucleolysis, and to serve as a scaffold for the association with catalytic subunits and accessory proteins or complexes. EXOSC9 binds to ARE-containing RNAs. The chain is Exosome complex component RRP45 (EXOSC9) from Bos taurus (Bovine).